The primary structure comprises 177 residues: Large ribosomal subunit protein uL6 (177 aa).

The interval 155–177 (EPYKGKGVKHADERIFRKEGKKK) is disordered.

Belongs to the universal ribosomal protein uL6 family. In terms of assembly, part of the 50S ribosomal subunit.

This protein binds to the 23S rRNA, and is important in its secondary structure. It is located near the subunit interface in the base of the L7/L12 stalk, and near the tRNA binding site of the peptidyltransferase center. This chain is Large ribosomal subunit protein uL6, found in Bartonella tribocorum (strain CIP 105476 / IBS 506).